Reading from the N-terminus, the 394-residue chain is uncharacterized protein (394 aa).

8 helical membrane passes run 22–42 (VLVSLFGVSLLLLCLAGVLLH), 60–80 (LALFDLHGLIGIWGLPWLLLF), 81–101 (GFTGALSGLGALGTLLLAPVA), 231–251 (LHLAMGLGACLLCASGLYLWL), 271–291 (GFCAGLVAAAALLLLGLQLAP), 303–323 (LFLVLWAAAGLAALLLPGDWP), 328–348 (LLGVAGLACLAAAVAHLAPWL), and 355–375 (ALGPDLTLILCGALLIRHAWM).

The protein resides in the cell membrane. This is an uncharacterized protein from Pseudomonas aeruginosa (strain ATCC 15692 / DSM 22644 / CIP 104116 / JCM 14847 / LMG 12228 / 1C / PRS 101 / PAO1).